The following is a 313-amino-acid chain: Olfactory receptor 4M1 (313 aa).

The Extracellular portion of the chain corresponds to 1 to 25 (MEPANDTTVTEFILTGLSQTREVQL). N-linked (GlcNAc...) asparagine glycosylation occurs at Asn-5. The chain crosses the membrane as a helical span at residues 26–46 (VLFVIFLSFYLFILPVNILII). Residues 47–57 (CTIRLDSHLSS) lie on the Cytoplasmic side of the membrane. A helical membrane pass occupies residues 58 to 78 (PMYFLLANLAFLDIWYSSITA). Topologically, residues 79–97 (PKMLVDFFVERKIISFGGC) are extracellular. Cys-97 and Cys-179 are oxidised to a cystine. The helical transmembrane segment at 98–118 (IAQLFFLHFVGASEMFLLTVM) threads the bilayer. Topologically, residues 119-142 (AFDRYAAICRPLHYATIMNRRLCC) are cytoplasmic. Residues 143-163 (ILVALSWTGGFVHSIIQVALI) form a helical membrane-spanning segment. Residues 164 to 204 (VRLPFCGPNELDNYFCDITQVVRIACANTFLEEMVMIFSSG) lie on the Extracellular side of the membrane. Residues 205-225 (LISVVCFIALLMSYAFLLTML) form a helical membrane-spanning segment. Topologically, residues 226–238 (KKHSSSGESTSRA) are cytoplasmic. The helical transmembrane segment at 239–259 (ISTCYSHITIVVLMFGPSIYI) threads the bilayer. At 260–270 (YARPFDSFSLD) the chain is on the extracellular side. Residues 271 to 291 (KVVSVFHTVIFPLLNPIIYTL) form a helical membrane-spanning segment. Residues 292 to 313 (RNKEVKAAMRKLVNRYIFCKEK) are Cytoplasmic-facing.

The protein belongs to the G-protein coupled receptor 1 family. As to expression, highly expressed in liver but not in adipose tissue. Also expressed at high level in testis.

The protein localises to the cell membrane. Functionally, olfactory receptor that acts as a receptor of Asprosin hormone at the surface of hepatocytes to promote hepatocyte glucose release. Also binds Asprosin in the arcuate nucleus of the hypothalamus, thereby stimulating appetite by promoting orexigenic AgRP neuronal activity. In testis, Asprosin-binding promotes sperm progressive motility and enhances male fertility. The activity of this receptor is mediated by G proteins which activate adenylyl cyclase, resulting in an elevation of intracellular cAMP. This Mus musculus (Mouse) protein is Olfactory receptor 4M1.